A 235-amino-acid chain; its full sequence is Germin-like protein 1-4 (235 aa).

A signal peptide spans 1-27; the sequence is MAAKLPTVVLLASFAAVILSLAAPLLA. Cysteines 37 and 55 form a disulfide. N-linked (GlcNAc...) asparagine glycosylation is present at Asn60. The Cupin type-1 domain occupies 69–226; the sequence is PGLGKPADVY…AFQVDGGVVE (158 aa). His120, His122, Glu127, and His171 together coordinate Mn(2+).

It belongs to the germin family. As to quaternary structure, oligomer (believed to be a pentamer but probably hexamer).

It localises to the secreted. Its subcellular location is the extracellular space. The protein localises to the apoplast. Its function is as follows. May play a role in plant defense. Probably has no oxalate oxidase activity even if the active site is conserved. The sequence is that of Germin-like protein 1-4 from Oryza sativa subsp. japonica (Rice).